Here is a 181-residue protein sequence, read N- to C-terminus: Peptide deformylase (181 aa).

Fe cation contacts are provided by C104 and H146. Residue E147 is part of the active site. H150 serves as a coordination point for Fe cation.

It belongs to the polypeptide deformylase family. Requires Fe(2+) as cofactor.

The catalysed reaction is N-terminal N-formyl-L-methionyl-[peptide] + H2O = N-terminal L-methionyl-[peptide] + formate. In terms of biological role, removes the formyl group from the N-terminal Met of newly synthesized proteins. Requires at least a dipeptide for an efficient rate of reaction. N-terminal L-methionine is a prerequisite for activity but the enzyme has broad specificity at other positions. The protein is Peptide deformylase of Helicobacter hepaticus (strain ATCC 51449 / 3B1).